A 295-amino-acid polypeptide reads, in one-letter code: Sulfotransferase 1A1 (295 aa).

Residue 48–53 participates in 3'-phosphoadenylyl sulfate binding; sequence KSGTTW. Residue 106 to 108 participates in substrate binding; that stretch reads KTH. Histidine 108 acts as the Proton acceptor in catalysis. 3'-phosphoadenylyl sulfate-binding positions include arginine 130, serine 138, tyrosine 193, 227-232, and 255-259; these read TSFKEM and FMRKG. Serine 138 is modified (phosphoserine).

Belongs to the sulfotransferase 1 family. As to quaternary structure, homodimer.

Its subcellular location is the cytoplasm. The catalysed reaction is a phenol + 3'-phosphoadenylyl sulfate = an aryl sulfate + adenosine 3',5'-bisphosphate + H(+). It carries out the reaction 17beta-estradiol + 3'-phosphoadenylyl sulfate = 17beta-estradiol 3-sulfate + adenosine 3',5'-bisphosphate + H(+). It catalyses the reaction 4-ethylphenol + 3'-phosphoadenylyl sulfate = 4-ethylphenyl sulfate + adenosine 3',5'-bisphosphate + H(+). The enzyme catalyses 4-nitrophenol + 3'-phosphoadenylyl sulfate = 4-nitrophenyl sulfate + adenosine 3',5'-bisphosphate. The catalysed reaction is dopamine + 3'-phosphoadenylyl sulfate = dopamine 3-O-sulfate + adenosine 3',5'-bisphosphate + H(+). It carries out the reaction dopamine + 3'-phosphoadenylyl sulfate = dopamine 4-O-sulfate + adenosine 3',5'-bisphosphate + H(+). It catalyses the reaction 3,3',5-triiodo-L-thyronine + 3'-phosphoadenylyl sulfate = 3,3',5-triiodo-L-thyronine sulfate + adenosine 3',5'-bisphosphate + H(+). The enzyme catalyses 3,3',5'-triiodo-L-thyronine + 3'-phosphoadenylyl sulfate = 3,3',5'-triiodo-L-thyronine sulfate + adenosine 3',5'-bisphosphate + H(+). The catalysed reaction is 3,3'-diiodo-L-thyronine + 3'-phosphoadenylyl sulfate = 3,3'-diiodo-L-thyronine sulfate + adenosine 3',5'-bisphosphate + H(+). It carries out the reaction L-thyroxine + 3'-phosphoadenylyl sulfate = L-thyroxine sulfate + adenosine 3',5'-bisphosphate + H(+). Functionally, sulfotransferase that utilizes 3'-phospho-5'-adenylyl sulfate (PAPS) as sulfonate donor to catalyze the sulfate conjugation of a wide variety of acceptor molecules bearing a hydroxyl or an amine group. Sulfonation increases the water solubility of most compounds, and therefore their renal excretion, but it can also result in bioactivation to form active metabolites. Displays broad substrate specificity for small phenolic compounds. Plays an important role in the sulfonation of endogenous molecules such as steroid hormones. Mediates also the metabolic activation of carcinogenic N-hydroxyarylamines leading to highly reactive intermediates capable of forming DNA adducts, potentially resulting in mutagenesis. May play a role in gut microbiota-host metabolic interaction. O-sulfonates 4-ethylphenol (4-EP), a dietary tyrosine-derived metabolite produced by gut bacteria. The product 4-EPS crosses the blood-brain barrier and may negatively regulate oligodendrocyte maturation and myelination, affecting the functional connectivity of different brain regions associated with the limbic system. Catalyzes the sulfate conjugation of dopamine. Catalyzes the sulfation of T4 (L-thyroxine/3,5,3',5'-tetraiodothyronine), T3 (3,5,3'-triiodothyronine), rT3 (3,3',5'-triiodothyronine) and 3,3'-T2 (3,3'-diiodothyronine), with a substrate preference of 3,3'-T2 &gt; rT3 &gt; T3 &gt; T4. This Macaca fascicularis (Crab-eating macaque) protein is Sulfotransferase 1A1 (SULT1A1).